The chain runs to 409 residues: Putative lipoate-protein ligase A (409 aa).

Positions 146 to 330 constitute a BPL/LPL catalytic domain; that stretch reads GPDNCRLVFY…RFQKTFKVDG (185 aa). ATP is bound by residues Arg-188, 193-196, and Lys-249; that span reads GTVL. Lys-249 provides a ligand contact to (R)-lipoate.

It belongs to the LplA family. Monomer.

The enzyme catalyses L-lysyl-[lipoyl-carrier protein] + (R)-lipoate + ATP = N(6)-[(R)-lipoyl]-L-lysyl-[lipoyl-carrier protein] + AMP + diphosphate + H(+). Its pathway is protein modification; protein lipoylation via exogenous pathway; protein N(6)-(lipoyl)lysine from lipoate: step 1/2. The protein operates within protein modification; protein lipoylation via exogenous pathway; protein N(6)-(lipoyl)lysine from lipoate: step 2/2. Catalyzes both the ATP-dependent activation of exogenously supplied lipoate to lipoyl-AMP and the transfer of the activated lipoyl onto the lipoyl domains of lipoate-dependent enzymes. This chain is Putative lipoate-protein ligase A (AIM22), found in Saccharomyces cerevisiae (strain YJM789) (Baker's yeast).